The chain runs to 2595 residues: Glucosylceramide transporter ABCA12 (2595 aa).

Residues 23-43 (PLWTLVLILWPVIIFIILAIT) form a helical membrane-spanning segment. N156, N174, N214, N275, N333, N367, N383, N412, N435, N528, N543, N577, N608, N623, N648, N752, N826, N920, and N963 each carry an N-linked (GlcNAc...) asparagine glycan. 3 consecutive transmembrane segments (helical) span residues 1065–1085 (VSYSLPIVLMVAWVVFIAAFV), 1112–1132 (FAWLIESVGFLLVTIVILIII), and 1145–1165 (FILFLYFSDYSFSVIAMSYLI). A glycan (N-linked (GlcNAc...) asparagine) is linked at N1170. 3 helical membrane passes run 1174 to 1194 (IAALIGSLIYIIAFFPFIVLV), 1200 to 1220 (LSYVLKVFMSLLSPTAFSYAS), and 1250 to 1270 (FGWLCCLILADSFIYFLIAWY). An ABC transporter 1 domain is found at 1346-1577 (VALHGVTKIY…FGDGYHLTLT (232 aa)). Position 1378 to 1385 (1378 to 1385 (GPNGAGKT)) interacts with ATP. N-linked (GlcNAc...) asparagine glycosylation is found at N1524, N1663, and N1704. Residues 1747–1767 (LIAQVILPIVFVTTAMGLGTL) traverse the membrane as a helical segment. 6 N-linked (GlcNAc...) asparagine glycosylation sites follow: N1769, N1819, N1835, N1876, N1921, and N1952. Helical transmembrane passes span 1979 to 1999 (ATISSLIDILVALSILMGYSV), 2035 to 2055 (FIYDMVFYLVPVAFSIGIIAI), 2072 to 2092 (LLLLLFGYATFSWMYLLAGLF), and 2103 to 2123 (VCVNLFFGINSIVSLSVVYFL). N-linked (GlcNAc...) asparagine glycosylation occurs at N2178. Residues 2187–2207 (GAMFVALVSQGTMFFSLRLLI) traverse the membrane as a helical segment. N-linked (GlcNAc...) asparagine glycosylation is found at N2208 and N2223. Residues 2254–2489 (VQLYCLTKTY…FGRGFTVKVH (236 aa)) enclose the ABC transporter 2 domain. Residues 2270-2290 (IIAVNNISIGIPAGECFGLLG) traverse the membrane as a helical segment. 2290-2297 (GVNGAGKT) is a binding site for ATP. N-linked (GlcNAc...) asparagine glycans are attached at residues N2318, N2542, and N2547. The tract at residues 2571 to 2595 (SYETADTSSQGSTISVDSQDDQMES) is disordered. Positions 2574 to 2587 (TADTSSQGSTISVD) are enriched in polar residues.

It belongs to the ABC transporter superfamily. ABCA family. As to quaternary structure, interacts with NR1H2 and ABCA1; this interaction is required for ABCA1 localization to the cell surface and is necessary for its normal activity and stability. Mainly expressed in the stomach, placenta, testis and fetal brain. Expressed in the upper epidermal layers, mainly the granular layers, of skin. Expressed throughout the normal interfollicular epidermis with prominent expression in the stratum granulosum. Expressed in alpha and beta cells of pancreatic islets.

The protein resides in the cytoplasmic vesicle. Its subcellular location is the secretory vesicle membrane. The protein localises to the golgi apparatus membrane. It catalyses the reaction ATP + H2O + phospholipidSide 1 = ADP + phosphate + phospholipidSide 2.. It carries out the reaction a beta-D-glucosylceramide(in) + ATP + H2O = a beta-D-glucosylceramide(out) + ADP + phosphate + H(+). In terms of biological role, transports lipids such as glucosylceramides from the outer to the inner leaflet of lamellar granules (LGs) membrane, whereby the lipids are finally transported to the keratinocyte periphery via the trans-Golgi network and LGs and released to the apical surface of the granular keratinocytes to form lipid lamellae in the stratum corneum of the epidermis, which is essential for skin barrier function. In the meantime, participates in the transport of the lamellar granules-associated proteolytic enzymes, in turn regulates desquamation and keratinocyte differentiation. Furthermore, is essential for the regulation of cellular cholesterol homeostasis by regulating ABCA1-dependent cholesterol efflux from macrophages through interaction with NR1H2 and ABCA1. Plays pleiotropic roles in regulating glucose stimulated insulin secretion from beta cells, regulating the morphology and fusion of insulin granules, lipid raft abundance and the actin cytoskeleton. Also involved in lung surfactant biogenesis. The sequence is that of Glucosylceramide transporter ABCA12 from Homo sapiens (Human).